The primary structure comprises 151 residues: 18 kDa heat shock protein (151 aa).

Positions 38 to 151 (TFNGNAGFKV…KDNGRRIDIH (114 aa)) constitute a sHSP domain.

This sequence belongs to the small heat shock protein (HSP20) family.

In terms of biological role, probable chaperone. The protein is 18 kDa heat shock protein (hsp18) of Clostridium acetobutylicum (strain ATCC 824 / DSM 792 / JCM 1419 / IAM 19013 / LMG 5710 / NBRC 13948 / NRRL B-527 / VKM B-1787 / 2291 / W).